Reading from the N-terminus, the 188-residue chain is Methionine aminopeptidase (188 aa).

His-60 is a binding site for substrate. 3 residues coordinate a divalent metal cation: Asp-80, Asp-91, and His-164. His-172 provides a ligand contact to substrate.

Belongs to the peptidase M24A family. Methionine aminopeptidase archaeal type 2 subfamily. As to quaternary structure, monomer. Requires Co(2+) as cofactor. It depends on Zn(2+) as a cofactor. Mn(2+) serves as cofactor. Fe(2+) is required as a cofactor.

It catalyses the reaction Release of N-terminal amino acids, preferentially methionine, from peptides and arylamides.. Its function is as follows. Removes the N-terminal methionine from nascent proteins. The N-terminal methionine is often cleaved when the second residue in the primary sequence is small and uncharged (Met-Ala-, Cys, Gly, Pro, Ser, Thr, or Val). This chain is Methionine aminopeptidase (map), found in Methanothermus fervidus.